We begin with the raw amino-acid sequence, 191 residues long: dTTP/UTP pyrophosphatase (191 aa).

The active-site Proton acceptor is the D64.

It belongs to the Maf family. YhdE subfamily. The cofactor is a divalent metal cation.

The protein resides in the cytoplasm. It carries out the reaction dTTP + H2O = dTMP + diphosphate + H(+). It catalyses the reaction UTP + H2O = UMP + diphosphate + H(+). Its function is as follows. Nucleoside triphosphate pyrophosphatase that hydrolyzes dTTP and UTP. May have a dual role in cell division arrest and in preventing the incorporation of modified nucleotides into cellular nucleic acids. In Thermosipho africanus (strain TCF52B), this protein is dTTP/UTP pyrophosphatase.